Consider the following 249-residue polypeptide: Triosephosphate isomerase (249 aa).

Position 11 to 13 (11 to 13 (NWK)) interacts with substrate. The active-site Electrophile is His-91. Glu-163 (proton acceptor) is an active-site residue. Substrate-binding positions include Gly-169, Ser-208, and 229 to 230 (GG).

This sequence belongs to the triosephosphate isomerase family. Homodimer.

The protein localises to the cytoplasm. It carries out the reaction D-glyceraldehyde 3-phosphate = dihydroxyacetone phosphate. The protein operates within carbohydrate biosynthesis; gluconeogenesis. It functions in the pathway carbohydrate degradation; glycolysis; D-glyceraldehyde 3-phosphate from glycerone phosphate: step 1/1. Its function is as follows. Involved in the gluconeogenesis. Catalyzes stereospecifically the conversion of dihydroxyacetone phosphate (DHAP) to D-glyceraldehyde-3-phosphate (G3P). This Pseudoalteromonas translucida (strain TAC 125) protein is Triosephosphate isomerase.